The primary structure comprises 455 residues: Ornithine decarboxylase (455 aa).

K67 carries the N6-(pyridoxal phosphate)lysine modification. Residues S197, G234, and 271–274 (EPGR) contribute to the pyridoxal 5'-phosphate site. Residue S297 is modified to Phosphoserine; by CK2. 325–326 (YD) serves as a coordination point for substrate. Catalysis depends on C354, which acts as the Proton donor; shared with dimeric partner. Residue C354 is modified to S-nitrosocysteine. D355 provides a ligand contact to substrate. Y383 is a binding site for pyridoxal 5'-phosphate.

It belongs to the Orn/Lys/Arg decarboxylase class-II family. In terms of assembly, homodimer. Only the dimer is catalytically active, as the active sites are constructed of residues from both monomers. It depends on pyridoxal 5'-phosphate as a cofactor.

It carries out the reaction L-ornithine + H(+) = putrescine + CO2. The protein operates within amine and polyamine biosynthesis; putrescine biosynthesis via L-ornithine pathway; putrescine from L-ornithine: step 1/1. Inhibited by antizymes (AZs) OAZ1, OAZ2 and OAZ3 in response to polyamine levels. AZs inhibit the assembly of the functional homodimer by binding to ODC monomers. Additionally, OAZ1 targets ODC monomers for ubiquitin-independent proteolytic destruction by the 26S proteasome. Catalyzes the first and rate-limiting step of polyamine biosynthesis that converts ornithine into putrescine, which is the precursor for the polyamines, spermidine and spermine. Polyamines are essential for cell proliferation and are implicated in cellular processes, ranging from DNA replication to apoptosis. The protein is Ornithine decarboxylase (ODC1) of Cricetulus griseus (Chinese hamster).